A 355-amino-acid chain; its full sequence is MASSSSNRQFSHRNVNTFLTYPHCPENPEIVCQMIWELVGRWTPKYIICAQEAHKDGDMHLHALLQTEKPVRITDSRFFDIEGFHPNIQSAKSVNKVRDYILKEPLAVFERGTFIPRKSSFQGNPSKGNSEKKPSKDEIMREIISHSTSKLEYLSMIRKEFPYDWATKLQYFEYSANKLFPEIQEEFISPHPPSSPDLLCNESIKDWLQPNIFQPTDEGTRKQSLYIVGPTRTGKSTWARSLGLHNYWQNNVDWSSYNEDAIYNIVDDIPFKFCPCWKQLVGCQKEFVVNPKYGKKKKVQMKSKPTIILANWDEDWMNEMTPGQLEYFEANCMIYKMSPGEKWYSPPVLPPTEEV.

A CRESS-DNA virus Rep endonuclease domain is found at 11-114; it reads SHRNVNTFLT…PLAVFERGTF (104 aa). The RCR-1 motif lies at 18-21; the sequence is FLTY. A divalent metal cation contacts are provided by Glu-52, His-60, and His-62. The RCR-2 signature appears at 60-62; sequence HLH. Tyr-100 serves as the catalytic For DNA cleavage activity. Positions 100 to 103 match the RCR-3 motif; it reads YILK. Glu-104 serves as a coordination point for a divalent metal cation. Over residues 119–128 the composition is skewed to polar residues; the sequence is SSFQGNPSKG. Residues 119 to 138 form a disordered region; it reads SSFQGNPSKGNSEKKPSKDE. Over residues 129 to 138 the composition is skewed to basic and acidic residues; sequence NSEKKPSKDE. An oligomerization region spans residues 175-187; the sequence is SANKLFPEIQEEF. 229 to 236 provides a ligand contact to ATP; the sequence is GPTRTGKS. The tract at residues 252 to 270 is transactivation; the sequence is VDWSSYNEDAIYNIVDDIP. The Nuclear localization signal motif lies at 292–303; that stretch reads KYGKKKKVQMKS.

The protein belongs to the geminiviridae Rep protein family. As to quaternary structure, homooligomer. Rep binds to repeated DNA motifs (iterons). Forms the O-complex, which is a Rep-DNA complex involved in the initiation of RCR. Part of the C- and V-complexes which are RepA-Rep-DNA complexes involved in the c-sense and v-sense transcription. Requires Mg(2+) as cofactor. It depends on Mn(2+) as a cofactor.

It is found in the host nucleus. Functionally, essential for the replication of viral ssDNA. The closed circular ssDNA genome is first converted to a superhelical dsDNA. Rep binds a specific region at the genome origin of replication. It introduces an endonucleolytic nick within the conserved sequence 5'-TAATATTAC-3' in the intergenic region of the genome present in all geminiviruses, thereby initiating the rolling circle replication (RCR). Following cleavage, binds covalently to the 5'-phosphate of DNA as a tyrosyl ester. The cleavage gives rise to a free 3'-OH that serves as a primer for the cellular DNA polymerase. The polymerase synthesizes the (+) strand DNA by rolling circle mechanism. After one round of replication, a Rep-catalyzed nucleotidyl transfer reaction releases a circular single-stranded virus genome, thereby terminating the replication. Displays origin-specific DNA cleavage, nucleotidyl transferase, ATPase and helicase activities. Acts as an inhibitor of C-sense gene transcription. This chain is Replication-associated protein, found in Maize streak virus genotype B (isolate Tas) (MSV).